The chain runs to 302 residues: Fluoroacetate dehalogenase (302 aa).

Residues 32 to 270 (PPLLLLHGFP…LDVWRKWASD (239 aa)) form the AB hydrolase-1 domain. D110 functions as the Nucleophile in the catalytic mechanism. Residues R111, R114, H155, W156, and Y219 each coordinate fluoroacetate. H280 serves as the catalytic Proton acceptor.

It belongs to the AB hydrolase superfamily. Epoxide hydrolase family. As to quaternary structure, homodimer.

It catalyses the reaction a haloacetate + H2O = a halide anion + glycolate + H(+). The enzyme catalyses fluoroacetate + H2O = fluoride + glycolate + H(+). The catalysed reaction is chloroacetate + H2O = glycolate + chloride + H(+). In terms of biological role, catalyzes the hydrolytic defluorination of fluoroacetate to produce glycolate. Has lower activity towards chloroacetate and bromoacetate. In Rhodopseudomonas palustris (strain ATCC BAA-98 / CGA009), this protein is Fluoroacetate dehalogenase.